A 332-amino-acid chain; its full sequence is Ketol-acid reductoisomerase (NADP(+)) (332 aa).

The KARI N-terminal Rossmann domain maps to 4-184 (ARMYYDEDAD…GGTRAGILET (181 aa)). NADP(+)-binding positions include 27-30 (YGSQ), Ser53, Ser55, and 85-88 (DEVQ). The active site involves His110. Gly136 is a binding site for NADP(+). The 146-residue stretch at 185–330 (TFREEAETDL…ADLRKMMSWL (146 aa)) folds into the KARI C-terminal knotted domain. Mg(2+) is bound by residues Asp193, Glu197, Glu229, and Glu233. Residue Ser254 participates in substrate binding.

The protein belongs to the ketol-acid reductoisomerase family. The cofactor is Mg(2+).

It catalyses the reaction (2R)-2,3-dihydroxy-3-methylbutanoate + NADP(+) = (2S)-2-acetolactate + NADPH + H(+). It carries out the reaction (2R,3R)-2,3-dihydroxy-3-methylpentanoate + NADP(+) = (S)-2-ethyl-2-hydroxy-3-oxobutanoate + NADPH + H(+). It functions in the pathway amino-acid biosynthesis; L-isoleucine biosynthesis; L-isoleucine from 2-oxobutanoate: step 2/4. The protein operates within amino-acid biosynthesis; L-valine biosynthesis; L-valine from pyruvate: step 2/4. In terms of biological role, involved in the biosynthesis of branched-chain amino acids (BCAA). Catalyzes an alkyl-migration followed by a ketol-acid reduction of (S)-2-acetolactate (S2AL) to yield (R)-2,3-dihydroxy-isovalerate. In the isomerase reaction, S2AL is rearranged via a Mg-dependent methyl migration to produce 3-hydroxy-3-methyl-2-ketobutyrate (HMKB). In the reductase reaction, this 2-ketoacid undergoes a metal-dependent reduction by NADPH to yield (R)-2,3-dihydroxy-isovalerate. The chain is Ketol-acid reductoisomerase (NADP(+)) from Gloeobacter violaceus (strain ATCC 29082 / PCC 7421).